The primary structure comprises 80 residues: Large ribosomal subunit protein bL28 (80 aa).

Residues 1-23 form a disordered region; the sequence is MARVCQITGKKTRTGNNVSHANN.

This sequence belongs to the bacterial ribosomal protein bL28 family.

The sequence is that of Large ribosomal subunit protein bL28 from Cytophaga hutchinsonii (strain ATCC 33406 / DSM 1761 / CIP 103989 / NBRC 15051 / NCIMB 9469 / D465).